The chain runs to 300 residues: Integrin-binding sialoprotein (300 aa).

The disordered stretch occupies residues 41-258 (RFPVQSSSDS…YEQTGAHEYD (218 aa)). Phosphoserine occurs at positions 46, 51, 59, 60, 82, and 90. Residues 46–58 (SSSDSSEENGNGD) are compositionally biased toward low complexity. Acidic residues predominate over residues 59–92 (SSEEEEEEEENSNEEENNEENEDSDGNEDEDSEA). The segment covering 93–102 (ENITLSTTTL) has biased composition (polar residues). A glycan (N-linked (GlcNAc...) asparagine) is linked at Asn94. Over residues 125-136 (KAGDIGKKSAKE) the composition is skewed to basic and acidic residues. Residues 137–160 (EESDEDEEEEEENEENEAEVDDNE) are compositionally biased toward acidic residues. Ser139 is subject to Phosphoserine. Polar residues-rich tracts occupy residues 161-173 (QGTN…STEV), 193-202 (VTEAQGTTVA), and 229-243 (ISGT…TTTP). N-linked (GlcNAc...) asparagine glycans are attached at residues Asn164 and Asn169. Phosphoserine is present on Ser266. The Integrin-binding motif motif lies at 272 to 274 (RGD). Ser293 bears the Phosphoserine mark. Sulfotyrosine occurs at positions 299 and 300.

Monomer. Interacts with integrins; the interaction promotes cell adhesion.

It localises to the secreted. Functionally, binds tightly to hydroxyapatite. Appears to form an integral part of the mineralized matrix. Probably important to cell-matrix interaction. Promotes adhesion and migration of various cells via the alpha-V/beta-3 integrin receptor (ITGAV:ITGB3). This is Integrin-binding sialoprotein (IBSP) from Sus scrofa (Pig).